The sequence spans 222 residues: Putative N-acetylmannosamine-6-phosphate 2-epimerase (222 aa).

Belongs to the NanE family.

The catalysed reaction is an N-acyl-D-glucosamine 6-phosphate = an N-acyl-D-mannosamine 6-phosphate. It participates in amino-sugar metabolism; N-acetylneuraminate degradation; D-fructose 6-phosphate from N-acetylneuraminate: step 3/5. In terms of biological role, converts N-acetylmannosamine-6-phosphate (ManNAc-6-P) to N-acetylglucosamine-6-phosphate (GlcNAc-6-P). In Staphylococcus saprophyticus subsp. saprophyticus (strain ATCC 15305 / DSM 20229 / NCIMB 8711 / NCTC 7292 / S-41), this protein is Putative N-acetylmannosamine-6-phosphate 2-epimerase.